The following is a 481-amino-acid chain: Guanine nucleotide exchange factor C9orf72 homolog (481 aa).

The uDENN C9ORF72-type domain maps to 23-194 (SPLLAATFAY…ELLASMRSHS (172 aa)). Residues 200-343 (DIADTVLNDD…SELTAFWRAT (144 aa)) enclose the cDENN C9ORF72-type domain. A dDENN C9ORF72-type domain is found at 370–464 (VLHRDTLVKA…IKPGLHSFIF (95 aa)). The segment at 461-481 (SFIFGRPFYTSVQERDVLMTF) is required for the homodimerization of the C9orf72-SMCR8 complex.

In terms of assembly, component of the C9orf72-SMCR8 complex, at least composed of C9orf72, SMCR8 and WDR41. The complex is formed of two protomers, each individually consisting of one molecule each of C9orf72, SMCR8 and WDR41. The protomers homodimerize via an interaction between C9orf72 (via C-terminus) and SMCR8 (via N-terminus). Within each protomer SMCR8 (via DENN domain) acts as a bridging protein between WDR41 (via C-terminus and N-terminus) and C9orf72 (via C-terminus). The C9orf72-SMCR8 complex associates with the ULK1/ATG1 kinase complex. Interacts with ULK1/ATG1 kinase complex members ULK1, ATG13 and RB1CC1. Interacts with SMCR8; the interaction is direct. Interacts with HNRNPA1, HNRNPA2B1 and UBQLN2. Interacts with small Rab GTPase RAB1A; the interaction mediates recruitment of RAB1A to the ULK1/ATG1 kinase complex. Also interacts with small Rab GTPase RAB7A. Interacts with cofilin. Interacts with GTP-binding proteins ARF1 and ARF6. Interacts with the DLG4/PSD-95. Interacts with CARM1 (via PH domain-like fold). Interacts with RAB39A and RAB39B (in GDP-bound forms); functions as GEF for RAB39A and RAB39B.

The protein localises to the nucleus. Its subcellular location is the cytoplasm. It is found in the P-body. It localises to the stress granule. The protein resides in the endosome. The protein localises to the lysosome. Its subcellular location is the cytoplasmic vesicle. It is found in the autophagosome. It localises to the autolysosome. The protein resides in the secreted. The protein localises to the cell projection. Its subcellular location is the axon. It is found in the growth cone. It localises to the perikaryon. Acts as a guanine-nucleotide releasing factor (GEF) for Rab GTPases by promoting the conversion of inactive RAB-GDP to the active form RAB-GTP. Acts as a GEF for RAB39A which enables HOPS-mediated autophagosome-lysosome membrane tethering and fusion in mammalian autophagy. Component of the C9orf72-SMCR8 complex where both subunits display GEF activity and that regulates autophagy. As part of the C9orf72-SMCR8-WDR41 (CSW) complex, functions as GEF for RAB8A and RAB39B, thereby promoting autophagosome maturation. As part of the C9orf72-SMCR8 complex, also functions as GTPase activating protein (GAP) for RAB8A and RAB11A in vitro. The C9orf72-SMCR8 complex also acts as a regulator of autophagy initiation by interacting with the ULK1/ATG1 kinase complex and modulating its protein kinase activity. Promotes initiation of autophagy by regulating the RAB1A-dependent trafficking of the ULK1/ATG1 kinase complex to the phagophore which leads to autophagosome formation. Acts as a regulator of mTORC1 signaling by promoting phosphorylation of mTORC1 substrates. Plays a role in endosomal trafficking. May be involved in regulating the maturation of phagosomes to lysosomes. Promotes the lysosomal localization and lysosome-mediated degradation of CARM1 which leads to inhibition of starvation-induced lipid metabolism. Regulates actin dynamics in motor neurons by inhibiting the GTP-binding activity of ARF6, leading to ARF6 inactivation. This reduces the activity of the LIMK1 and LIMK2 kinases which are responsible for phosphorylation and inactivation of cofilin, leading to CFL1/cofilin activation. Positively regulates axon extension and axon growth cone size in spinal motor neurons. Required for SMCR8 protein expression and localization at pre- and post-synaptic compartments in the forebrain, also regulates protein abundance of RAB3A and GRIA1/GLUR1 in post-synaptic compartments in the forebrain and hippocampus. Plays a role within the hematopoietic system in restricting inflammation and the development of autoimmunity. The chain is Guanine nucleotide exchange factor C9orf72 homolog from Rattus norvegicus (Rat).